A 492-amino-acid polypeptide reads, in one-letter code: V-type proton ATPase subunit B 2 (492 aa).

The protein belongs to the ATPase alpha/beta chains family. V-ATPase is a heteromultimeric enzyme composed of a peripheral catalytic V1 complex (main components: subunits A, B, C, D, E, and F) attached to an integral membrane V0 proton pore complex (main component: the proteolipid protein).

In terms of biological role, non-catalytic subunit of the peripheral V1 complex of vacuolar ATPase. V-ATPase is responsible for acidifying a variety of intracellular compartments in eukaryotic cells. The protein is V-type proton ATPase subunit B 2 of Acetabularia acetabulum (Mermaid's wine glass).